Consider the following 90-residue polypeptide: ATP synthase subunit c (90 aa).

2 helical membrane-spanning segments follow: residues 4-24 (FVYS…GCGI) and 53-73 (IGLA…LILI).

This sequence belongs to the ATPase C chain family. In terms of assembly, F-type ATPases have 2 components, F(1) - the catalytic core - and F(0) - the membrane proton channel. F(1) has five subunits: alpha(3), beta(3), gamma(1), delta(1), epsilon(1). F(0) has three main subunits: a(1), b(2) and c(10-14). The alpha and beta chains form an alternating ring which encloses part of the gamma chain. F(1) is attached to F(0) by a central stalk formed by the gamma and epsilon chains, while a peripheral stalk is formed by the delta and b chains.

The protein localises to the cell inner membrane. In terms of biological role, f(1)F(0) ATP synthase produces ATP from ADP in the presence of a proton or sodium gradient. F-type ATPases consist of two structural domains, F(1) containing the extramembraneous catalytic core and F(0) containing the membrane proton channel, linked together by a central stalk and a peripheral stalk. During catalysis, ATP synthesis in the catalytic domain of F(1) is coupled via a rotary mechanism of the central stalk subunits to proton translocation. Functionally, key component of the F(0) channel; it plays a direct role in translocation across the membrane. A homomeric c-ring of between 10-14 subunits forms the central stalk rotor element with the F(1) delta and epsilon subunits. The chain is ATP synthase subunit c from Syntrophobacter fumaroxidans (strain DSM 10017 / MPOB).